Consider the following 689-residue polypeptide: MNQRPIQTATLSWNEQGTPVSEQFGDIYFSNEDGLEETHHVFLKGNGFPARFASHPQQSCIFAETGFGTGLNFLTLWRDFALFRQQSPNATLRRLHYISFEKYPLHVADLASAHARWPELASFAEQLRAQWPLPLAGCHRILLADGAITLDLWFGDVNTLLPTLDDSLNNQVDAWFLDGFAPAKNPDMWNEQLFNAMARMTRPGGTFSTFTAAGFVRRGLQQAGFNVTKVKGFGQKREMLTGTLPQQIHAPTAPWYHRPAATRCDDIAIIGGGIVSALTALALQRRGAVVTLYCADAQPAQGASGNRQGALYPLLNGKNDALETFFTSAFTFARRQYDQLLEQGIAFDHQWCGVSQLAFDDKSRGKIEKMLHTQWPVEFAEAMSREQLSELAGLDCAHDGIHYPAGGWLCPSDLTHALMMLAQQHGMTCHYQHELQRLKRIDNQWQLTFGQSQAAKHHATVILATGHRLPEWEQTHHLPLSAVRGQVSHIPTTPVLSQLQQVLCYDGYLTPVNPANQHHCIGASYQRGDIATDFRLTEQQENRERLLRCLPQVSWPQQVDVSDNQARCGVRCAIRDHLPMVGAVPDYAATLAQYQDLSRRIQHGGESEVNDIAVAPVWPELFMVGGLGSRGLCSAPLVAEILAAQMFGEPLPLDAKTLAALNPNRFWIRKLLKGRPVQTRSPATQESSR.

Residues 1-245 (MNQRPIQTAT…KREMLTGTLP (245 aa)) are tRNA (mnm(5)s(2)U34)-methyltransferase. Positions 270 to 689 (IGGGIVSALT…RSPATQESSR (420 aa)) are FAD-dependent cmnm(5)s(2)U34 oxidoreductase.

In the N-terminal section; belongs to the methyltransferase superfamily. tRNA (mnm(5)s(2)U34)-methyltransferase family. The protein in the C-terminal section; belongs to the DAO family. It depends on FAD as a cofactor.

The protein resides in the cytoplasm. The catalysed reaction is 5-aminomethyl-2-thiouridine(34) in tRNA + S-adenosyl-L-methionine = 5-methylaminomethyl-2-thiouridine(34) in tRNA + S-adenosyl-L-homocysteine + H(+). Functionally, catalyzes the last two steps in the biosynthesis of 5-methylaminomethyl-2-thiouridine (mnm(5)s(2)U) at the wobble position (U34) in tRNA. Catalyzes the FAD-dependent demodification of cmnm(5)s(2)U34 to nm(5)s(2)U34, followed by the transfer of a methyl group from S-adenosyl-L-methionine to nm(5)s(2)U34, to form mnm(5)s(2)U34. The protein is tRNA 5-methylaminomethyl-2-thiouridine biosynthesis bifunctional protein MnmC of Yersinia pseudotuberculosis serotype O:1b (strain IP 31758).